We begin with the raw amino-acid sequence, 500 residues long: Kynurenine 3-monooxygenase (500 aa).

Belongs to the aromatic-ring hydroxylase family. KMO subfamily. FAD serves as cofactor.

The protein resides in the mitochondrion outer membrane. The catalysed reaction is L-kynurenine + NADPH + O2 + H(+) = 3-hydroxy-L-kynurenine + NADP(+) + H2O. Its pathway is cofactor biosynthesis; NAD(+) biosynthesis; quinolinate from L-kynurenine: step 1/3. Catalyzes the hydroxylation of L-kynurenine (L-Kyn) to form 3-hydroxy-L-kynurenine (L-3OHKyn). Required for synthesis of quinolinic acid. The polypeptide is Kynurenine 3-monooxygenase (bna4) (Aspergillus terreus (strain NIH 2624 / FGSC A1156)).